Reading from the N-terminus, the 208-residue chain is Large ribosomal subunit protein bL17 (208 aa).

A disordered region spans residues Thr122–Glu208. Low complexity predominate over residues Ala151–Glu179.

Belongs to the bacterial ribosomal protein bL17 family. In terms of assembly, part of the 50S ribosomal subunit. Contacts protein L32.

This chain is Large ribosomal subunit protein bL17, found in Desulfosudis oleivorans (strain DSM 6200 / JCM 39069 / Hxd3) (Desulfococcus oleovorans).